Here is a 64-residue protein sequence, read N- to C-terminus: Small, acid-soluble spore protein D (64 aa).

Belongs to the alpha/beta-type SASP family.

Its function is as follows. SASP are bound to spore DNA. They are double-stranded DNA-binding proteins that cause DNA to change to an a-like conformation. They protect the DNA backbone from chemical and enzymatic cleavage and are thus involved in dormant spore's high resistance to UV light. The polypeptide is Small, acid-soluble spore protein D (sspD) (Bacillus subtilis (strain 168)).